The sequence spans 51 residues: MRDKIKLVSSAGTGFFYTTDKNKRNMPGKMEIKKYDPVVRKHVMFKEAKIK.

The protein belongs to the bacterial ribosomal protein bL33 family.

The sequence is that of Large ribosomal subunit protein bL33 from Alteromonas mediterranea (strain DSM 17117 / CIP 110805 / LMG 28347 / Deep ecotype).